The chain runs to 348 residues: Anthranilate phosphoribosyltransferase (348 aa).

5-phospho-alpha-D-ribose 1-diphosphate contacts are provided by residues G81, 84–85, T89, 91–94, 109–117, and S121; these read GD, NIST, and KHGNRAMSS. G81 serves as a coordination point for anthranilate. Residue S93 coordinates Mg(2+). Residue N112 participates in anthranilate binding. R167 contributes to the anthranilate binding site. Mg(2+)-binding residues include D226 and E227.

This sequence belongs to the anthranilate phosphoribosyltransferase family. In terms of assembly, homodimer. Mg(2+) is required as a cofactor.

It catalyses the reaction N-(5-phospho-beta-D-ribosyl)anthranilate + diphosphate = 5-phospho-alpha-D-ribose 1-diphosphate + anthranilate. The protein operates within amino-acid biosynthesis; L-tryptophan biosynthesis; L-tryptophan from chorismate: step 2/5. Its function is as follows. Catalyzes the transfer of the phosphoribosyl group of 5-phosphorylribose-1-pyrophosphate (PRPP) to anthranilate to yield N-(5'-phosphoribosyl)-anthranilate (PRA). The sequence is that of Anthranilate phosphoribosyltransferase from Thermomicrobium roseum (strain ATCC 27502 / DSM 5159 / P-2).